The sequence spans 246 residues: Uridylate kinase (246 aa).

Position 20 to 23 (20 to 23 (KISG)) interacts with ATP. Residues 28–33 (GDQGYG) are involved in allosteric activation by GTP. A UMP-binding site is contributed by glycine 62. Residues glycine 63 and arginine 67 each contribute to the ATP site. UMP is bound by residues aspartate 82 and 143-150 (TGNPYFTT). Residues threonine 170, tyrosine 176, and aspartate 179 each coordinate ATP.

It belongs to the UMP kinase family. Homohexamer.

The protein resides in the cytoplasm. The catalysed reaction is UMP + ATP = UDP + ADP. It participates in pyrimidine metabolism; CTP biosynthesis via de novo pathway; UDP from UMP (UMPK route): step 1/1. Allosterically activated by GTP. Inhibited by UTP. Catalyzes the reversible phosphorylation of UMP to UDP. The protein is Uridylate kinase of Cereibacter sphaeroides (strain ATCC 17023 / DSM 158 / JCM 6121 / CCUG 31486 / LMG 2827 / NBRC 12203 / NCIMB 8253 / ATH 2.4.1.) (Rhodobacter sphaeroides).